Consider the following 319-residue polypeptide: MLNKITAVLQFGLNASLLLAYLIVFVLSIMGVIDSRYAFLLEIEGKQSVINLSIPIMLAFGMWILFYMFYFIWKIIVWTKNRSSSSNTNVNFNAKENFYVAITCIMVNVITGLCWMLFAAFQIYVFKNGHLPALDVLYRHYDLESMCWNSIVYLEIDYANTETLSQNCVYVNIYKKCIMCRAIVSDHEPTVFNQNYPVIIMGVLTILAVQCWNLYVQLKEMRHNIYMKRRAEAEKASYEHYCDIDYRREERESNSRLLEVVSEGRNSSSVVAVTHPPSTTSTTTSVSETLSSFIAPSDLSSQPSPSSHPSSPFGNHNEF.

A compositionally biased stretch (low complexity) spans 268–312; sequence SSVVAVTHPPSTTSTTTSVSETLSSFIAPSDLSSQPSPSSHPSSP. The interval 268–319 is disordered; it reads SSVVAVTHPPSTTSTTTSVSETLSSFIAPSDLSSQPSPSSHPSSPFGNHNEF.

This is an uncharacterized protein from Lepidoptera (butterflies and moths).